The chain runs to 343 residues: MSKTNKKISSDINHTTKYGSKTPKKVYLSNKVIKRNKNDIRNISYKEINDEFSWGNYLNLKVIIMNDNGYINVTKLIQQANKEKKMGDWNKNKDSKNIVKSACEYTGLTEDKLFIIKTGGNNSTIRGTYAHPIIVAQIAGWASSDFAIKASVIINDYIAKQMFKEHEKIIEEKDKTIKRRDKKIDQLNNKMDDLLKKNDKMSKRIKRLVDTADDLRNQNDDINDKLDVVCNDRVVQSDTNTHRFVIMKNNSDKEDYEYHSIRRLKNSVNNAVKEYKELYPDAEIIMNLGYTPNSICLWNNIKKKLKSKRKIKGTGSDFNLRGDFTEEKLIEEVTKIHNSRFER.

One can recognise a KilA-N domain in the interval 51-157; that stretch reads EFSWGNYLNL…IKASVIINDY (107 aa). Residues 159 to 279 adopt a coiled-coil conformation; sequence AKQMFKEHEK…NAVKEYKELY (121 aa).

In Acanthamoeba polyphaga mimivirus (APMV), this protein is Putative KilA-N domain-containing protein R904.